A 435-amino-acid chain; its full sequence is Serine/threonine-protein kinase ssn3 (435 aa).

The region spanning 49-377 (YRIVGFISSG…AREALEHPYF (329 aa)) is the Protein kinase domain. Residues 55–63 (ISSGTYGRV) and Lys79 contribute to the ATP site. The active-site Proton acceptor is Asp181. Basic and acidic residues predominate over residues 398 to 407 (RRVTQDDNDI). The tract at residues 398–435 (RRVTQDDNDIRSGSLPGTKRSGLPDDSLMGRASKRIKE) is disordered.

This sequence belongs to the protein kinase superfamily. CMGC Ser/Thr protein kinase family. CDC2/CDKX subfamily. Component of the srb8-11 complex, a regulatory module of the Mediator complex. Mg(2+) serves as cofactor.

It localises to the nucleus. It carries out the reaction L-seryl-[protein] + ATP = O-phospho-L-seryl-[protein] + ADP + H(+). The enzyme catalyses L-threonyl-[protein] + ATP = O-phospho-L-threonyl-[protein] + ADP + H(+). It catalyses the reaction [DNA-directed RNA polymerase] + ATP = phospho-[DNA-directed RNA polymerase] + ADP + H(+). Component of the srb8-11 complex. The srb8-11 complex is a regulatory module of the Mediator complex which is itself involved in regulation of basal and activated RNA polymerase II-dependent transcription. The srb8-11 complex may be involved in the transcriptional repression of a subset of genes regulated by Mediator. It may inhibit the association of the Mediator complex with RNA polymerase II to form the holoenzyme complex. The srb8-11 complex phosphorylates the C-terminal domain (CTD) of the largest subunit of RNA polymerase II. This Aspergillus terreus (strain NIH 2624 / FGSC A1156) protein is Serine/threonine-protein kinase ssn3 (ssn3).